A 274-amino-acid chain; its full sequence is Sulfur carrier protein FdhD (274 aa).

The active-site Cysteine persulfide intermediate is C121. 258–263 (FSKPGR) provides a ligand contact to Mo-bis(molybdopterin guanine dinucleotide).

This sequence belongs to the FdhD family.

It localises to the cytoplasm. Required for formate dehydrogenase (FDH) activity. Acts as a sulfur carrier protein that transfers sulfur from IscS to the molybdenum cofactor prior to its insertion into FDH. In Yersinia pseudotuberculosis serotype O:3 (strain YPIII), this protein is Sulfur carrier protein FdhD.